The primary structure comprises 209 residues: MENYFESPFRGITLDKQVKSPNLVVGKYSYYSGYYHGHSFEDCARYLLPDEGADRLVIGSFCSIGSGAAFIMAGNQGHRNEWISTFPFFFMPEVPEFENAANGYLPAGDTVIGNDVWIGSEAIIMPGITVGDGAVIGTRALVTKDVEPYAIVGGNPAKTIRKRFDDDSIALLLEMKWWGWPAERLKAAMPLMTSGNVAALYRFWRSDSL.

Residue H78 is part of the active site.

It belongs to the transferase hexapeptide repeat family.

It carries out the reaction chloramphenicol + acetyl-CoA = chloramphenicol 3-acetate + CoA. This enzyme is an effector of chloramphenicol resistance in bacteria. The chain is Chloramphenicol acetyltransferase (cat) from Agrobacterium fabrum (strain C58 / ATCC 33970) (Agrobacterium tumefaciens (strain C58)).